The following is a 381-amino-acid chain: Acetyl-CoA:oxalate CoA-transferase (381 aa).

Histidine 233 is an active-site residue.

The protein belongs to the CoA-transferase III family. As to quaternary structure, homodimer.

The catalysed reaction is oxalate + acetyl-CoA = oxalyl-CoA + acetate. Functionally, involved in the catabolism of oxalate and in the adapatation to low pH. ACOCT serves to prime the oxalate-induced acid tolerance response (ATR) cycle by producing substrate for oxalyl-CoA decarboxylase (OXC) and formyl-coenzyme A transferase (FCOCT). Catalyzes the reversible conversion of acetyl-CoA and oxalate to oxalyl-CoA and acetate. It can also use formyl-CoA and oxalate to produce oxalyl-CoA and formate with significantly reduced specific activity. In Escherichia coli (strain K12), this protein is Acetyl-CoA:oxalate CoA-transferase (yfdE).